The chain runs to 72 residues: Male-specific sperm protein Mst84Dd (72 aa).

Belongs to the MST(3)CGP family. As to expression, testis.

The polypeptide is Male-specific sperm protein Mst84Dd (Mst84Dd) (Drosophila melanogaster (Fruit fly)).